Reading from the N-terminus, the 87-residue chain is Phosphoribosyl-ATP pyrophosphatase (87 aa).

The protein belongs to the PRA-PH family.

It localises to the cytoplasm. The enzyme catalyses 1-(5-phospho-beta-D-ribosyl)-ATP + H2O = 1-(5-phospho-beta-D-ribosyl)-5'-AMP + diphosphate + H(+). The protein operates within amino-acid biosynthesis; L-histidine biosynthesis; L-histidine from 5-phospho-alpha-D-ribose 1-diphosphate: step 2/9. This is Phosphoribosyl-ATP pyrophosphatase from Bifidobacterium animalis subsp. lactis (strain AD011).